The chain runs to 362 residues: Phosphoserine aminotransferase (362 aa).

Residue Arg-42 participates in L-glutamate binding. Pyridoxal 5'-phosphate is bound by residues 76-77 (AR), Trp-102, Thr-153, Asp-174, and Gln-197. N6-(pyridoxal phosphate)lysine is present on Lys-198. Residue 239 to 240 (NT) coordinates pyridoxal 5'-phosphate.

Belongs to the class-V pyridoxal-phosphate-dependent aminotransferase family. SerC subfamily. As to quaternary structure, homodimer. Pyridoxal 5'-phosphate serves as cofactor.

The protein localises to the cytoplasm. The catalysed reaction is O-phospho-L-serine + 2-oxoglutarate = 3-phosphooxypyruvate + L-glutamate. The enzyme catalyses 4-(phosphooxy)-L-threonine + 2-oxoglutarate = (R)-3-hydroxy-2-oxo-4-phosphooxybutanoate + L-glutamate. The protein operates within amino-acid biosynthesis; L-serine biosynthesis; L-serine from 3-phospho-D-glycerate: step 2/3. It functions in the pathway cofactor biosynthesis; pyridoxine 5'-phosphate biosynthesis; pyridoxine 5'-phosphate from D-erythrose 4-phosphate: step 3/5. In terms of biological role, catalyzes the reversible conversion of 3-phosphohydroxypyruvate to phosphoserine and of 3-hydroxy-2-oxo-4-phosphonooxybutanoate to phosphohydroxythreonine. The chain is Phosphoserine aminotransferase from Xenorhabdus nematophila (strain ATCC 19061 / DSM 3370 / CCUG 14189 / LMG 1036 / NCIMB 9965 / AN6).